The chain runs to 89 residues: Cell division topological specificity factor (89 aa).

This sequence belongs to the MinE family.

Functionally, prevents the cell division inhibition by proteins MinC and MinD at internal division sites while permitting inhibition at polar sites. This ensures cell division at the proper site by restricting the formation of a division septum at the midpoint of the long axis of the cell. This Desulforudis audaxviator (strain MP104C) protein is Cell division topological specificity factor.